The chain runs to 213 residues: Uridine kinase (213 aa).

An ATP-binding site is contributed by 15–22 (GASASGKS).

The protein belongs to the uridine kinase family.

The protein resides in the cytoplasm. The catalysed reaction is uridine + ATP = UMP + ADP + H(+). The enzyme catalyses cytidine + ATP = CMP + ADP + H(+). It functions in the pathway pyrimidine metabolism; CTP biosynthesis via salvage pathway; CTP from cytidine: step 1/3. Its pathway is pyrimidine metabolism; UMP biosynthesis via salvage pathway; UMP from uridine: step 1/1. This is Uridine kinase from Salmonella newport (strain SL254).